Here is an 89-residue protein sequence, read N- to C-terminus: MFAIMTVTGQDHTGIIAAVSTALAELDVNIHNVSQTIMDKWFTMILHVGFDDAALTIADIQERMTSVEKEQGLVIRIQSEALFSAVNDI.

The ACT domain occupies 4–78 (IMTVTGQDHT…KEQGLVIRIQ (75 aa)).

This sequence belongs to the UPF0237 family.

This is UPF0237 protein CE1668 from Corynebacterium efficiens (strain DSM 44549 / YS-314 / AJ 12310 / JCM 11189 / NBRC 100395).